The primary structure comprises 175 residues: Auxin-responsive protein IAA28 (175 aa).

Residues 1–39 (MEEEKRLELRLAPPCHQFTSNNNINGSKQKSSTKETSFL) are disordered. Positions 7–11 (LELRL) match the EAR-like (transcriptional repression) motif. A compositionally biased stretch (polar residues) spans 17–39 (QFTSNNNINGSKQKSSTKETSFL). Residues 80-161 (ELYVKINMEG…TVKRLHVLKT (82 aa)) form the PB1 domain.

It belongs to the Aux/IAA family. Homodimers and heterodimers. Interacts with TPL. In roots and inflorescence stems.

The protein resides in the nucleus. In terms of biological role, aux/IAA proteins are short-lived transcriptional factors that function as repressors of early auxin response genes at low auxin concentrations. Repression is thought to result from the interaction with auxin response factors (ARFs), proteins that bind to the auxin-responsive promoter element (AuxRE). Formation of heterodimers with ARF proteins may alter their ability to modulate early auxin response genes expression. The protein is Auxin-responsive protein IAA28 (IAA28) of Arabidopsis thaliana (Mouse-ear cress).